Consider the following 416-residue polypeptide: Cotranscriptional regulator ARB2A (416 aa).

The first 18 residues, 1–18, serve as a signal peptide directing secretion; it reads MSISLSSLILLPIWINMA. The segment at 208-247 is disordered; the sequence is KPKIHVQSSSDSSDEPAEKRERKDKVSKETKKRRDFYEKY. Residues 223–236 are compositionally biased toward basic and acidic residues; sequence PAEKRERKDKVSKE. Residue S293 is the Nucleophile of the active site. Positions 413 to 416 match the Prevents secretion from ER motif; that stretch reads HEEL.

This sequence belongs to the ARB2A family. Interacts with AGO2. Found in a complex, composed of AGO2, CHD7 and ARB2A.

It is found in the nucleus. The protein resides in the cytoplasm. It localises to the endoplasmic reticulum. Functionally, plays a role in the regulation of alternative splicing, by interacting with AGO2 and CHD7. Seems to be required for stabilizing protein-protein interactions at the chromatin-spliceosome interface. May have hydrolase activity. In Homo sapiens (Human), this protein is Cotranscriptional regulator ARB2A.